A 184-amino-acid polypeptide reads, in one-letter code: Large ribosomal subunit protein uL6 (184 aa).

This sequence belongs to the universal ribosomal protein uL6 family. Part of the 50S ribosomal subunit.

Its function is as follows. This protein binds to the 23S rRNA, and is important in its secondary structure. It is located near the subunit interface in the base of the L7/L12 stalk, and near the tRNA binding site of the peptidyltransferase center. The polypeptide is Large ribosomal subunit protein uL6 (Methanosphaera stadtmanae (strain ATCC 43021 / DSM 3091 / JCM 11832 / MCB-3)).